The primary structure comprises 86 residues: Antifungal protein 2 (86 aa).

The signal sequence occupies residues 1 to 21; that stretch reads MHLSTALFSAIALLAATQVIG. Disulfide bonds link C43–C57, C45–C74, and C49–C83. Residues 44–54 are lipid-binding; it reads NCPNNCKHKKG. A Gamma-core motif is present at residues 72-83; the sequence is GKCEWQGGQLNC.

Its subcellular location is the secreted. Its function is as follows. Cysteine-rich antifungal protein highly effective against yeasts such as clinically relevant Candida species, including the multidrug-resistant pathogen Candida auris. Does not cause metabolic inactivity and apoptosis induction, but the fungal cell-killing activity is connected to its pore-forming ability in the cell membrane. NFAP2 has a low potential to trigger resistance in C.albicans in vitro, and the developed tolerance to NFAP2 is not associated with severe phenotypic changes compared with development of resistance to generic fluconazole. The sequence is that of Antifungal protein 2 from Neosartorya fischeri (strain ATCC 1020 / DSM 3700 / CBS 544.65 / FGSC A1164 / JCM 1740 / NRRL 181 / WB 181) (Aspergillus fischerianus).